The chain runs to 728 residues: 1,4-alpha-glucan branching enzyme GlgB (728 aa).

Asp-405 functions as the Nucleophile in the catalytic mechanism. The active-site Proton donor is the Glu-458.

It belongs to the glycosyl hydrolase 13 family. GlgB subfamily. As to quaternary structure, monomer.

The enzyme catalyses Transfers a segment of a (1-&gt;4)-alpha-D-glucan chain to a primary hydroxy group in a similar glucan chain.. Its pathway is glycan biosynthesis; glycogen biosynthesis. In terms of biological role, catalyzes the formation of the alpha-1,6-glucosidic linkages in glycogen by scission of a 1,4-alpha-linked oligosaccharide from growing alpha-1,4-glucan chains and the subsequent attachment of the oligosaccharide to the alpha-1,6 position. This is 1,4-alpha-glucan branching enzyme GlgB from Escherichia coli O139:H28 (strain E24377A / ETEC).